The following is a 484-amino-acid chain: Chromosomal replication initiator protein DnaA (484 aa).

The domain I, interacts with DnaA modulators stretch occupies residues 1–73 (MQEGKNIWSL…EILTEKGHNT (73 aa)). Residues 73 to 140 (TINVEFINPP…EDIHTKYRNP (68 aa)) are domain II. The interval 141 to 357 (FLKKKYTFEN…AAVTKLKAHI (217 aa)) is domain III, AAA+ region. ATP is bound by residues Gly185, Gly187, Lys188, and Thr189. Residues 358–484 (DLEDIEIDTS…IELMNKINKN (127 aa)) are domain IV, binds dsDNA.

Belongs to the DnaA family. In terms of assembly, oligomerizes as a right-handed, spiral filament on DNA at oriC.

It is found in the cytoplasm. Functionally, plays an essential role in the initiation and regulation of chromosomal replication. ATP-DnaA binds to the origin of replication (oriC) to initiate formation of the DNA replication initiation complex once per cell cycle. Binds the DnaA box (a 9 base pair repeat at the origin) and separates the double-stranded (ds)DNA. Forms a right-handed helical filament on oriC DNA; dsDNA binds to the exterior of the filament while single-stranded (ss)DNA is stabiized in the filament's interior. The ATP-DnaA-oriC complex binds and stabilizes one strand of the AT-rich DNA unwinding element (DUE), permitting loading of DNA polymerase. After initiation quickly degrades to an ADP-DnaA complex that is not apt for DNA replication. Binds acidic phospholipids. The polypeptide is Chromosomal replication initiator protein DnaA (Borrelia turicatae (strain 91E135)).